The following is a 252-amino-acid chain: MIRESQYFMFNNIPSYELGAVNVNTEGGLLEESFIANRTVNETYTRLSSEPYVDNVKLEPYEIPLNFYIENHLDEKNVRRVARWLNVDDYKPLSFSRNLDIIYFALPINATDLVHNCSNDGYVKLTMKVFPYKYGQETTTHWFDVTSGVKNIEIENIGDVDIPLSLEFKKIGDGDITVENLTLYRTPLKFTGIKHHEVINVDSNKKLITSSISGYECYDQVNEEYVILTRGKNRIKINGECYIRLKYRYKYL.

The protein is SPbeta prophage-derived uncharacterized protein YomH (yomH) of Bacillus subtilis (strain 168).